A 392-amino-acid chain; its full sequence is Tyrosine--tRNA ligase (392 aa).

The short motif at 41-50 is the 'HIGH' region element; it reads PTAPDLHLGH. Residues 225 to 229 carry the 'KMSKS' region motif; that stretch reads KMSKS. Lysine 228 is an ATP binding site. The S4 RNA-binding domain occupies 330–390; it reads LRAVDFLVKI…VGKKKFYRVV (61 aa).

Belongs to the class-I aminoacyl-tRNA synthetase family. TyrS type 2 subfamily. As to quaternary structure, homodimer.

It is found in the cytoplasm. The catalysed reaction is tRNA(Tyr) + L-tyrosine + ATP = L-tyrosyl-tRNA(Tyr) + AMP + diphosphate + H(+). In terms of biological role, catalyzes the attachment of tyrosine to tRNA(Tyr) in a two-step reaction: tyrosine is first activated by ATP to form Tyr-AMP and then transferred to the acceptor end of tRNA(Tyr). The chain is Tyrosine--tRNA ligase from Aquifex aeolicus (strain VF5).